We begin with the raw amino-acid sequence, 170 residues long: Urease accessory protein UreE (170 aa).

It belongs to the UreE family.

The protein localises to the cytoplasm. Its function is as follows. Involved in urease metallocenter assembly. Binds nickel. Probably functions as a nickel donor during metallocenter assembly. This Helicobacter pylori (strain P12) protein is Urease accessory protein UreE.